We begin with the raw amino-acid sequence, 527 residues long: Arginine--tRNA ligase (527 aa).

Residues 108–118 (ANPTGPLHIGH) carry the 'HIGH' region motif.

Belongs to the class-I aminoacyl-tRNA synthetase family. In terms of assembly, monomer.

Its subcellular location is the cytoplasm. It carries out the reaction tRNA(Arg) + L-arginine + ATP = L-arginyl-tRNA(Arg) + AMP + diphosphate. This chain is Arginine--tRNA ligase, found in Sulfurimonas denitrificans (strain ATCC 33889 / DSM 1251) (Thiomicrospira denitrificans (strain ATCC 33889 / DSM 1251)).